A 194-amino-acid polypeptide reads, in one-letter code: Ribonuclease HII (194 aa).

One can recognise an RNase H type-2 domain in the interval 3-193; it reads ILTAGVDEAG…VRNLFAQQAL (191 aa). A divalent metal cation-binding residues include Asp9, Glu10, and Asp101.

The protein belongs to the RNase HII family. Requires Mn(2+) as cofactor. It depends on Mg(2+) as a cofactor.

It localises to the cytoplasm. It catalyses the reaction Endonucleolytic cleavage to 5'-phosphomonoester.. Its function is as follows. Endonuclease that specifically degrades the RNA of RNA-DNA hybrids. This is Ribonuclease HII from Neisseria meningitidis serogroup C / serotype 2a (strain ATCC 700532 / DSM 15464 / FAM18).